We begin with the raw amino-acid sequence, 156 residues long: Eosinophil cationic protein 2 (156 aa).

An N-terminal signal peptide occupies residues 1 to 25 (MGPKLLESRLCLLLLLGLVLMLASC). His38 serves as the catalytic Proton acceptor. 4 disulfides stabilise this stretch: Cys47–Cys106, Cys61–Cys119, Cys79–Cys134, and Cys86–Cys94. 62–66 (KGLNT) is a substrate binding site. N-linked (GlcNAc...) asparagine glycans are attached at residues Asn89, Asn96, and Asn107. His151 functions as the Proton donor in the catalytic mechanism.

The protein belongs to the pancreatic ribonuclease family.

It localises to the cytoplasmic granule. In terms of biological role, cytotoxin and helminthotoxin with ribonuclease activity. Selectively chemotactic for dendritic cells. Possesses a wide variety of biological activities. This chain is Eosinophil cationic protein 2 (Ear2), found in Mus musculus (Mouse).